A 204-amino-acid polypeptide reads, in one-letter code: Peptide deformylase (204 aa).

Fe cation is bound by residues Cys131 and His174. Residue Glu175 is part of the active site. Residue His178 participates in Fe cation binding.

It belongs to the polypeptide deformylase family. It depends on Fe(2+) as a cofactor.

It carries out the reaction N-terminal N-formyl-L-methionyl-[peptide] + H2O = N-terminal L-methionyl-[peptide] + formate. Functionally, removes the formyl group from the N-terminal Met of newly synthesized proteins. Requires at least a dipeptide for an efficient rate of reaction. N-terminal L-methionine is a prerequisite for activity but the enzyme has broad specificity at other positions. In Streptococcus pyogenes serotype M18 (strain MGAS8232), this protein is Peptide deformylase.